The primary structure comprises 141 residues: 16 kDa protein (141 aa).

The disordered stretch occupies residues 97 to 119; that stretch reads ASATVKKSHKSKPSKKKFKERKD. A compositionally biased stretch (basic residues) spans 102-115; that stretch reads KKSHKSKPSKKKFK.

In Beta vulgaris (Sugar beet), this protein is 16 kDa protein.